The sequence spans 178 residues: Large ribosomal subunit protein uL6 (178 aa).

It belongs to the universal ribosomal protein uL6 family. As to quaternary structure, part of the 50S ribosomal subunit.

This protein binds to the 23S rRNA, and is important in its secondary structure. It is located near the subunit interface in the base of the L7/L12 stalk, and near the tRNA binding site of the peptidyltransferase center. The protein is Large ribosomal subunit protein uL6 of Listeria monocytogenes serotype 4a (strain HCC23).